The sequence spans 279 residues: NADPH-dependent 7-cyano-7-deazaguanine reductase (279 aa).

86–88 (IES) serves as a coordination point for substrate. 88 to 89 (SK) serves as a coordination point for NADPH. Catalysis depends on Cys187, which acts as the Thioimide intermediate. Asp194 serves as the catalytic Proton donor. 226-227 (HE) serves as a coordination point for substrate. Residue 255–256 (RG) participates in NADPH binding.

It belongs to the GTP cyclohydrolase I family. QueF type 2 subfamily. In terms of assembly, homodimer.

It is found in the cytoplasm. It carries out the reaction 7-aminomethyl-7-carbaguanine + 2 NADP(+) = 7-cyano-7-deazaguanine + 2 NADPH + 3 H(+). It participates in tRNA modification; tRNA-queuosine biosynthesis. Its function is as follows. Catalyzes the NADPH-dependent reduction of 7-cyano-7-deazaguanine (preQ0) to 7-aminomethyl-7-deazaguanine (preQ1). The chain is NADPH-dependent 7-cyano-7-deazaguanine reductase from Pasteurella multocida (strain Pm70).